The sequence spans 55 residues: Cytochrome b-c1 complex subunit 9 (55 aa).

The Mitochondrial matrix portion of the chain corresponds to 1–15 (MKVIYNTLFKRTSTY). A helical transmembrane segment spans residues 16-41 (AVAIIASAFFFERALDVTSVAIFEGI). The Chloroplast intermembrane segment spans residues 42-55 (NKGKLWKDIKGKYE).

It belongs to the UQCR10/QCR9 family. As to quaternary structure, component of the ubiquinol-cytochrome c oxidoreductase (cytochrome b-c1 complex, complex III, CIII), a multisubunit enzyme composed of 3 respiratory subunits cytochrome b, cytochrome c1 and Rieske protein, 2 core protein subunits, and additional low-molecular weight protein subunits. The complex exists as an obligatory dimer and forms supercomplexes (SCs) in the inner mitochondrial membrane with cytochrome c oxidase (complex IV, CIV).

It localises to the mitochondrion inner membrane. Component of the ubiquinol-cytochrome c oxidoreductase, a multisubunit transmembrane complex that is part of the mitochondrial electron transport chain which drives oxidative phosphorylation. The respiratory chain contains 3 multisubunit complexes succinate dehydrogenase (complex II, CII), ubiquinol-cytochrome c oxidoreductase (cytochrome b-c1 complex, complex III, CIII) and cytochrome c oxidase (complex IV, CIV), that cooperate to transfer electrons derived from NADH and succinate to molecular oxygen, creating an electrochemical gradient over the inner membrane that drives transmembrane transport and the ATP synthase. The cytochrome b-c1 complex catalyzes electron transfer from ubiquinol to cytochrome c, linking this redox reaction to translocation of protons across the mitochondrial inner membrane, with protons being carried across the membrane as hydrogens on the quinol. In the process called Q cycle, 2 protons are consumed from the matrix, 4 protons are released into the intermembrane space and 2 electrons are passed to cytochrome c. This is Cytochrome b-c1 complex subunit 9 (ox) from Drosophila melanogaster (Fruit fly).